A 249-amino-acid chain; its full sequence is 2,3-bisphosphoglycerate-dependent phosphoglycerate mutase (249 aa).

Substrate is bound by residues 8-15, 21-22, Arg-60, 87-90, Lys-98, 114-115, and 183-184; these read RHGESVWN, TG, ERHY, RR, and GN. His-9 functions as the Tele-phosphohistidine intermediate in the catalytic mechanism. Glu-87 acts as the Proton donor/acceptor in catalysis.

The protein belongs to the phosphoglycerate mutase family. BPG-dependent PGAM subfamily.

The catalysed reaction is (2R)-2-phosphoglycerate = (2R)-3-phosphoglycerate. The protein operates within carbohydrate degradation; glycolysis; pyruvate from D-glyceraldehyde 3-phosphate: step 3/5. Catalyzes the interconversion of 2-phosphoglycerate and 3-phosphoglycerate. The sequence is that of 2,3-bisphosphoglycerate-dependent phosphoglycerate mutase from Endomicrobium trichonymphae.